Consider the following 150-residue polypeptide: D-aminoacyl-tRNA deacylase (150 aa).

A Gly-cisPro motif, important for rejection of L-amino acids motif is present at residues 138–139 (GP).

This sequence belongs to the DTD family. As to quaternary structure, homodimer.

The protein localises to the cytoplasm. It catalyses the reaction glycyl-tRNA(Ala) + H2O = tRNA(Ala) + glycine + H(+). The catalysed reaction is a D-aminoacyl-tRNA + H2O = a tRNA + a D-alpha-amino acid + H(+). Its function is as follows. An aminoacyl-tRNA editing enzyme that deacylates mischarged D-aminoacyl-tRNAs. Also deacylates mischarged glycyl-tRNA(Ala), protecting cells against glycine mischarging by AlaRS. Acts via tRNA-based rather than protein-based catalysis; rejects L-amino acids rather than detecting D-amino acids in the active site. By recycling D-aminoacyl-tRNA to D-amino acids and free tRNA molecules, this enzyme counteracts the toxicity associated with the formation of D-aminoacyl-tRNA entities in vivo and helps enforce protein L-homochirality. This Chlorobium limicola (strain DSM 245 / NBRC 103803 / 6330) protein is D-aminoacyl-tRNA deacylase.